The sequence spans 167 residues: uncharacterized protein (167 aa).

It is found in the mitochondrion. This is an uncharacterized protein from Ascobolus immersus.